A 206-amino-acid polypeptide reads, in one-letter code: Imidazoleglycerol-phosphate dehydratase (206 aa).

The segment at 1 to 24 (MDPTASGRQAPRNPRQATVQRETK) is disordered.

The protein belongs to the imidazoleglycerol-phosphate dehydratase family.

The protein resides in the cytoplasm. The enzyme catalyses D-erythro-1-(imidazol-4-yl)glycerol 3-phosphate = 3-(imidazol-4-yl)-2-oxopropyl phosphate + H2O. It functions in the pathway amino-acid biosynthesis; L-histidine biosynthesis; L-histidine from 5-phospho-alpha-D-ribose 1-diphosphate: step 6/9. The protein is Imidazoleglycerol-phosphate dehydratase of Acidothermus cellulolyticus (strain ATCC 43068 / DSM 8971 / 11B).